Reading from the N-terminus, the 270-residue chain is MHALGRTPALTLLIFINIFVSGSRCTDKNQTIQNDSSSPLTQVNTTVSVQIGTKALLCCFSIPLTKAVLITWIIKLRDLPSCTILYKVDTKTIETSCLDRNITWASTPDHSPELQISAVTLQHEGTYTCETVTPEGNFGRVYDLQVLVPPEVTYFPGKNRTAVCEAMAGKPAAQISWTPDGDCVTTSESHSNGTVTVRSTCHWEQNNVSAVSCIVSHSTGNKSLFIELNQGSTTTTTSLLTILYVKMVLLGIILLHVGFAFFQKRNVIRT.

An N-terminal signal peptide occupies residues 1–25 (MHALGRTPALTLLIFINIFVSGSRC). Over 26–241 (TDKNQTIQND…STTTTTSLLT (216 aa)) the chain is Extracellular. One can recognise an Ig-like V-type domain in the interval 39–145 (PLTQVNTTVS…GNFGRVYDLQ (107 aa)). The N-linked (GlcNAc...) asparagine glycan is linked to Asn-44. 2 cysteine pairs are disulfide-bonded: Cys-59/Cys-129 and Cys-164/Cys-213. One can recognise an Ig-like C2-type domain in the interval 134 to 229 (PEGNFGRVYD…GNKSLFIELN (96 aa)). N-linked (GlcNAc...) asparagine glycans are attached at residues Asn-192 and Asn-221. Residues 242 to 262 (ILYVKMVLLGIILLHVGFAFF) form a helical membrane-spanning segment. Topologically, residues 263-270 (QKRNVIRT) are cytoplasmic.

The protein belongs to the CD200R family.

It localises to the membrane. Functionally, may not be a receptor for the CD200/OX2 cell surface glycoprotein. The sequence is that of Cell surface glycoprotein CD200 receptor 5 (Cd200r5) from Mus musculus (Mouse).